The following is a 65-amino-acid chain: VESP-VB1 (65 aa).

An N-terminal signal peptide occupies residues 1 to 23 (MKMSILFLFALIASLACLQLTFA). AXPX repeat units follow at residues 23–26 (AAPA), 27–30 (ASPL), 31–34 (ANPG), 35–38 (ASPE), 39–42 (AAPL), 43–46 (ADPL), and 47–50 (ADPF). Residues 24-49 (APAASPLANPGASPEAAPLADPLADP) constitute a propeptide that is removed on maturation. Leu-62 is subject to Leucine amide.

In terms of tissue distribution, expressed by the venom gland.

The protein resides in the secreted. Functionally, antimicrobial peptide. Shows activity against both Gram-positive (S.aureus MIC=1.0-3.75 ug/ml) and -negative (E.coli MIC=7.5-15 ug/ml) bacteria, as well against fungi (C.albicans MIC=30 ug/ml). Also promotes important mast cell degranulation. Shows little hemolytic activity on rabbit and human erythrocytes. Its mast cell degranulation activity may be related to the activation of G-protein coupled receptors in mast cells as well as interaction with other proteins located in cell endosomal membranes in the mast cells. The sequence is that of VESP-VB1 from Vespa bicolor (Black shield wasp).